Reading from the N-terminus, the 644-residue chain is 3D-(3,5/4)-trihydroxycyclohexane-1,2-dione hydrolase (644 aa).

Glu-65 is a binding site for thiamine diphosphate. Positions 442 to 522 are thiamine pyrophosphate binding; it reads SLPGDLQRMW…INVLLFDNSG (81 aa). Mg(2+)-binding residues include Asp-493 and Asn-520.

Belongs to the TPP enzyme family. Mg(2+) serves as cofactor. Requires thiamine diphosphate as cofactor.

It catalyses the reaction 3D-3,5/4-trihydroxycyclohexane-1,2-dione + H2O = 5-deoxy-D-glucuronate + H(+). It participates in polyol metabolism; myo-inositol degradation into acetyl-CoA; acetyl-CoA from myo-inositol: step 3/7. In terms of biological role, involved in the cleavage of the C1-C2 bond of 3D-(3,5/4)-trihydroxycyclohexane-1,2-dione (THcHDO) to yield 5-deoxy-glucuronate (5DG). The sequence is that of 3D-(3,5/4)-trihydroxycyclohexane-1,2-dione hydrolase from Bacillus anthracis (strain A0248).